The chain runs to 251 residues: Hydroxyacylglutathione hydrolase (251 aa).

The Zn(2+) site is built by His54, His56, Asp58, His59, His113, Asp140, and His178.

This sequence belongs to the metallo-beta-lactamase superfamily. Glyoxalase II family. In terms of assembly, monomer. Zn(2+) serves as cofactor.

The enzyme catalyses an S-(2-hydroxyacyl)glutathione + H2O = a 2-hydroxy carboxylate + glutathione + H(+). Its pathway is secondary metabolite metabolism; methylglyoxal degradation; (R)-lactate from methylglyoxal: step 2/2. Functionally, thiolesterase that catalyzes the hydrolysis of S-D-lactoyl-glutathione to form glutathione and D-lactic acid. The protein is Hydroxyacylglutathione hydrolase of Synechococcus sp. (strain CC9902).